A 272-amino-acid polypeptide reads, in one-letter code: N-acetylmuramoyl-L-alanine amidase CwlA (272 aa).

In terms of domain architecture, N-acetylmuramoyl-L-alanine amidase spans 24-142 (KAEYITIHNT…QDWNGKYCPH (119 aa)).

The protein belongs to the N-acetylmuramoyl-L-alanine amidase 2 family.

It carries out the reaction Hydrolyzes the link between N-acetylmuramoyl residues and L-amino acid residues in certain cell-wall glycopeptides.. Autolysins are involved in some important biological processes such as cell separation, cell-wall turnover, competence for genetic transformation, formation of the flagella and sporulation. This is N-acetylmuramoyl-L-alanine amidase CwlA (cwlA) from Bacillus subtilis (strain 168).